A 1477-amino-acid polypeptide reads, in one-letter code: Inositol hexakisphosphate and diphosphoinositol-pentakisphosphate kinase 1 (1477 aa).

The disordered stretch occupies residues 27–47 (TRGLGMRPEESDSELLEDEED). Over residues 37–47 (SDSELLEDEED) the composition is skewed to acidic residues. A substrate-binding site is contributed by 64–65 (KK). ATP is bound by residues Arg-145, Lys-198, His-205, Arg-224, 248-251 (EEFM), and 257-259 (DVK). 224-225 (RK) contacts substrate. 2 residues coordinate substrate: Lys-259 and Arg-273. ATP is bound by residues Ser-275, Asp-320, and 332-334 (DVN). 337–340 (SFVK) lines the substrate pocket. Residues 382–453 (PTTSGTMMEL…VLDITRLLLA (72 aa)) are polyphosphoinositide-binding domain. A disordered region spans residues 910-1016 (KGVEEEGSAP…PTEMKQSGLG (107 aa)). 2 positions are modified to phosphoserine: Ser-940 and Ser-983. A compositionally biased stretch (polar residues) spans 1001-1016 (FSSSRPPTEMKQSGLG). Residues Ser-1033, Ser-1069, Ser-1141, and Ser-1148 each carry the phosphoserine modification. Disordered regions lie at residues 1131 to 1248 (HSNQ…KPCQ) and 1438 to 1477 (REEVPQVQCPPSNANPQSQSLAPDQNAPLPPATCDSSFSH). Residues 1164–1182 (SSGPSSTVSSAGPSSPTAV) are compositionally biased toward low complexity. Residues 1446-1460 (CPPSNANPQSQSLAP) show a composition bias toward polar residues.

This sequence belongs to the histidine acid phosphatase family. VIP1 subfamily.

The protein resides in the cytoplasm. Its subcellular location is the cytosol. The protein localises to the cell membrane. The enzyme catalyses 1D-myo-inositol hexakisphosphate + ATP = 1-diphospho-1D-myo-inositol 2,3,4,5,6-pentakisphosphate + ADP. It carries out the reaction 5-diphospho-1D-myo-inositol 1,2,3,4,6-pentakisphosphate + ATP + H(+) = 1,5-bis(diphospho)-1D-myo-inositol 2,3,4,6-tetrakisphosphate + ADP. In terms of biological role, bifunctional inositol kinase that acts in concert with the IP6K kinases IP6K1, IP6K2 and IP6K3 to synthesize the diphosphate group-containing inositol pyrophosphates diphosphoinositol pentakisphosphate, PP-InsP5, and bis-diphosphoinositol tetrakisphosphate, (PP)2-InsP4. PP-InsP5 and (PP)2-InsP4, also respectively called InsP7 and InsP8, regulate a variety of cellular processes, including apoptosis, vesicle trafficking, cytoskeletal dynamics, exocytosis, insulin signaling and neutrophil activation. Phosphorylates inositol hexakisphosphate (InsP6) at position 1 to produce PP-InsP5 which is in turn phosphorylated by IP6Ks to produce (PP)2-InsP4. Alternatively, phosphorylates PP-InsP5 at position 1, produced by IP6Ks from InsP6, to produce (PP)2-InsP4. Activated when cells are exposed to hyperosmotic stress. This chain is Inositol hexakisphosphate and diphosphoinositol-pentakisphosphate kinase 1, found in Bos taurus (Bovine).